A 188-amino-acid chain; its full sequence is Pro-adrenomedullin (188 aa).

The first 21 residues, 1–21, serve as a signal peptide directing secretion; it reads MKLVPVALMYLGSLAFLGADT. R41 bears the Arginine amide mark. A propeptide spanning residues 45–92 is cleaved from the precursor; sequence ELRLSSSYPTGIADLKAGPAQTVIRPQDVKGSSRSPQASIPDAARIRV. The cysteines at positions 110 and 115 are disulfide-linked. Positions 131–177 are disordered; that stretch reads DKDGVAPRSKISPQGYGRRRRRSLPEASLGRTLRSQEPQAHGAPASP. The residue at position 146 (Y146) is a Tyrosine amide. A propeptide spans 153 to 188 (preproAM C-terminal fragment); that stretch reads SLPEASLGRTLRSQEPQAHGAPASPAHQVLATLFRI.

This sequence belongs to the adrenomedullin family. In terms of tissue distribution, highly expressed in adrenal glands, lung and kidney.

Its subcellular location is the secreted. Adrenomedullin/ADM and proadrenomedullin N-20 terminal peptide/PAMP are peptide hormones that act as potent hypotensive and vasodilatator agents. Numerous actions have been reported most related to the physiologic control of fluid and electrolyte homeostasis. Its function is as follows. ADM function is mediated by the CALCRL-RAMP2 and CALCRL-RAMP3 receptor complexes with ADM showing the highest potency for the CALCRL-RAMP2 complex. This Sus scrofa (Pig) protein is Pro-adrenomedullin (ADM).